Here is a 93-residue protein sequence, read N- to C-terminus: U12-lycotoxin-Ls1b (93 aa).

Residues 1-18 (MKFAVILLFSLVVLAVAS) form the signal peptide. Residues 19 to 38 (ESVEEVRREIDIEDLPEQQR) constitute a propeptide that is removed on maturation.

The protein belongs to the neurotoxin 31 family. Contains 5 disulfide bonds. In terms of tissue distribution, expressed by the venom gland.

It is found in the secreted. This is U12-lycotoxin-Ls1b from Lycosa singoriensis (Wolf spider).